A 236-amino-acid chain; its full sequence is tRNA (guanine-N(1)-)-methyltransferase (236 aa).

S-adenosyl-L-methionine is bound by residues Gly-112 and 132 to 137 (VGDFIL).

This sequence belongs to the RNA methyltransferase TrmD family. In terms of assembly, homodimer.

It is found in the cytoplasm. The catalysed reaction is guanosine(37) in tRNA + S-adenosyl-L-methionine = N(1)-methylguanosine(37) in tRNA + S-adenosyl-L-homocysteine + H(+). In terms of biological role, specifically methylates guanosine-37 in various tRNAs. The chain is tRNA (guanine-N(1)-)-methyltransferase from Campylobacter curvus (strain 525.92).